Reading from the N-terminus, the 129-residue chain is Gas vesicle protein C (129 aa).

3 consecutive repeats follow at residues 19–51, 52–84, and 85–117; these read VTQLFRETHEFLSATTAHRQEQAKQQAQQLHQF, HQNLEQTTHEFLTETTTQRVAQAEAQANFLHKF, and HQNLEQTTQEFLAETAKNRTEQAKAQSQYLQQF. The 3 X 33 AA tandem repeats stretch occupies residues 19 to 117; it reads VTQLFRETHE…KAQSQYLQQF (99 aa).

The protein belongs to the gas vesicle GvpC family.

The protein resides in the gas vesicle. Its function is as follows. Confers stability, involved in shaping gas vesicles, hollow, gas filled proteinaceous nanostructures. During planktonic growth they allow positioning of the organism at a favorable depth for light or nutrient acquisition. Functionally, cluster expression in E.coli (gvpA1-gvpA2-gvpC-gvpN-gvpJ-gvpK-gvpF-gvpG-gvpV-gvpW) allows cells to float and produces irregularly shaped gas vesicles. In Nostoc sp. (strain PCC 7120 / SAG 25.82 / UTEX 2576), this protein is Gas vesicle protein C.